Consider the following 574-residue polypeptide: Sentrin-specific protease 3 (574 aa).

A disordered region spans residues 1 to 125 (MKETIQGTGS…PTHRKTCSQR (125 aa)). Phosphoserine is present on residues Ser54, Ser73, and Ser75. The segment covering 74–93 (ASEEEEEEEEEEDEDEEEEV) has biased composition (acidic residues). Residues 112-125 (RPSRPTHRKTCSQR) are compositionally biased toward basic residues. Short sequence motifs (nuclear localization signal) lie at residues 125–128 (RRRR) and 153–159 (RHRGRRR). The segment at 161–181 (LAHPKNHLSPQQGGATPQVPS) is disordered. Residue Ser169 is modified to Phosphoserine. At Thr176 the chain carries Phosphothreonine. Residues Ser181, Ser188, Ser212, and Ser232 each carry the phosphoserine modification. Positions 386–543 (HVLTMDDLGT…AFVLQYCKHL (158 aa)) are protease. Active-site residues include His465 and Asp482. Cys532 acts as the Nucleophile in catalysis.

It belongs to the peptidase C48 family. As to quaternary structure, component of some MLL1/MLL complex, at least composed of the core components KMT2A/MLL1, ASH2L, HCFC1/HCF1, WDR5 and RBBP5, as well as the facultative components BACC1, CHD8, E2F6, HSP70, INO80C, KANSL1, LAS1L, MAX, MCRS1, MGA, MYST1/MOF, PELP1, PHF20, PRP31, RING2, RUVB1/TIP49A, RUVB2/TIP49B, SENP3, TAF1, TAF4, TAF6, TAF7, TAF9 and TEX10. Interacts with EP300, NPM1 and CDCA8. Component of the 5FMC complex, at least composed of PELP1, LAS1L, TEX10, WDR18 and SENP3; the complex interacts with methylated CHTOP and ZNF148. Interacts with NOL9. Interacts with CCAR2.

The protein localises to the nucleus. It localises to the nucleolus. It is found in the nucleoplasm. Its subcellular location is the cytoplasm. On oxidative stress, SENP3 degradation is blocked by inhibition of its ubiquitination, which stabilizes it as it accumulates in the nucleoplasm. Its function is as follows. Protease that releases SUMO2 and SUMO3 monomers from sumoylated substrates, but has only weak activity against SUMO1 conjugates. Deconjugates SUMO2 from MEF2D, which increases its transcriptional activation capability. Deconjugates SUMO2 and SUMO3 from CDCA8. Redox sensor that, when redistributed into nucleoplasm, can act as an effector to enhance HIF1A transcriptional activity by desumoylating EP300. Required for rRNA processing through deconjugation of SUMO2 and SUMO3 from nucleophosmin, NPM1. Plays a role in the regulation of sumoylation status of ZNF148. Functions as a component of the Five Friends of Methylated CHTOP (5FMC) complex; the 5FMC complex is recruited to ZNF148 by methylated CHTOP, leading to desumoylation of ZNF148 and subsequent transactivation of ZNF148 target genes. Deconjugates SUMO2 from KAT5. Catalyzes desumoylation of MRE11. This Homo sapiens (Human) protein is Sentrin-specific protease 3.